We begin with the raw amino-acid sequence, 1274 residues long: Protein ECM30 (1274 aa).

Disordered stretches follow at residues 23–42 (EDAD…SLSV), 405–439 (RRAV…QTKP), and 494–517 (SSSS…DTSN). 3 stretches are compositionally biased toward low complexity: residues 27–42 (ASSP…SLSV), 409–432 (STSS…AAYH), and 494–515 (SSSS…SNDT). Position 635 is a phosphoserine (Ser-635). Positions 803–822 (NQQHQNQQQGQNDNRGQNQN) are enriched in low complexity. The disordered stretch occupies residues 803–842 (NQQHQNQQQGQNDNRGQNQNEDPGQENESPTPYLLFNPAS). Ser-1065 carries the phosphoserine modification. Residues 1100-1149 (HLRSSSSSSSITLEKTTSNSSSIRTRPNSHHVAPETNNNNSTNGNSNNSS) form a disordered region. The span at 1110-1125 (ITLEKTTSNSSSIRTR) shows a compositional bias: polar residues. Over residues 1135 to 1149 (TNNNNSTNGNSNNSS) the composition is skewed to low complexity.

Its subcellular location is the cytoplasm. Its function is as follows. Seems to be involved in cell wall organization and biogenesis. This Saccharomyces cerevisiae (strain ATCC 204508 / S288c) (Baker's yeast) protein is Protein ECM30 (ECM30).